The chain runs to 439 residues: ATP-dependent protease ATPase subunit HslU (439 aa).

ATP-binding positions include Ile17, 59–64 (GVGKTE), Asp251, Glu317, and Arg389.

The protein belongs to the ClpX chaperone family. HslU subfamily. A double ring-shaped homohexamer of HslV is capped on each side by a ring-shaped HslU homohexamer. The assembly of the HslU/HslV complex is dependent on binding of ATP.

Its subcellular location is the cytoplasm. In terms of biological role, ATPase subunit of a proteasome-like degradation complex; this subunit has chaperone activity. The binding of ATP and its subsequent hydrolysis by HslU are essential for unfolding of protein substrates subsequently hydrolyzed by HslV. HslU recognizes the N-terminal part of its protein substrates and unfolds these before they are guided to HslV for hydrolysis. The protein is ATP-dependent protease ATPase subunit HslU of Campylobacter jejuni subsp. jejuni serotype O:2 (strain ATCC 700819 / NCTC 11168).